Here is a 107-residue protein sequence, read N- to C-terminus: uncharacterized protein (107 aa).

2 consecutive transmembrane segments (helical) span residues 11-31 and 58-78; these read CVNF…ILCI and LFFL…LAFQ.

The protein resides in the mitochondrion membrane. This is an uncharacterized protein from Saccharomyces cerevisiae (strain ATCC 204508 / S288c) (Baker's yeast).